Here is a 199-residue protein sequence, read N- to C-terminus: Thymidine kinase (199 aa).

ATP is bound by residues 9-16 (GAMSSGKS) and 93-96 (DEAQ). The Proton acceptor role is filled by E94. Zn(2+) contacts are provided by C151, C154, C188, and H191.

The protein belongs to the thymidine kinase family. Homotetramer.

The protein localises to the cytoplasm. It carries out the reaction thymidine + ATP = dTMP + ADP + H(+). This Lactobacillus johnsonii (strain CNCM I-12250 / La1 / NCC 533) protein is Thymidine kinase.